The following is an 83-amino-acid chain: MKQRNNAKRVRLEQTRRPKKNPLKAAGIEKVDYKDINTLRQFISDRHKIRSRRVTGLTPQQQREVATAVKNAREMALLPFTSR.

The segment at 1–23 (MKQRNNAKRVRLEQTRRPKKNPL) is disordered.

This sequence belongs to the bacterial ribosomal protein bS18 family. As to quaternary structure, part of the 30S ribosomal subunit. Forms a tight heterodimer with protein bS6.

In terms of biological role, binds as a heterodimer with protein bS6 to the central domain of the 16S rRNA, where it helps stabilize the platform of the 30S subunit. This Corynebacterium efficiens (strain DSM 44549 / YS-314 / AJ 12310 / JCM 11189 / NBRC 100395) protein is Small ribosomal subunit protein bS18.